The sequence spans 521 residues: Outer membrane protein assembly factor BamB (521 aa).

Residues 1-19 (MKKLFLVIVPLLLSLLATS) form the signal peptide. Cysteine 20 carries N-palmitoyl cysteine lipidation. Cysteine 20 is lipidated: S-diacylglycerol cysteine. The interval 418–521 (KSGSIESSPK…IGDFSKGDSD (104 aa)) is disordered. A compositionally biased stretch (basic and acidic residues) spans 429 to 444 (LPDKKVDSNKTSKNDT). Residues 445-477 (DSNPATTATSTKDIQNPANQEMINSTPVSNTST) show a composition bias toward polar residues.

The protein belongs to the BamB family. In terms of assembly, part of the Bam complex.

It localises to the cell outer membrane. Functionally, part of the outer membrane protein assembly complex, which is involved in assembly and insertion of beta-barrel proteins into the outer membrane. The polypeptide is Outer membrane protein assembly factor BamB (Francisella salina).